We begin with the raw amino-acid sequence, 932 residues long: MKIKKIPWLGHFDDRGHRLSIFSIHIHPDGSRIATGGLDGTIRIWSTEAINRENENENENEDLPKQLCCMSTHTGTVTSVRFSPNGQYLASGSDDRVVIIWHKEEAIPGLGSTFGSGEKHTENWRSYRRLLGHDNDIQDLCWSYDSQLVVSVGLDSSIIVWNGTTFERLKRIEAHQSHVKGITFDPAGKYFATESDDRTIKVWRVSDFSIEKTITGPFNNSPLSTYFRRPSWSPDGKHIAAPNAMNGPVSCVSIIERGTWTSEINLIGHEGPVEVTAFNPKLFRDKNDKLVCILACGGQDRSLSIWSSALPRPLLSCQNVFQKSIGDVCWSPDGLSLFLCSYDGNVLVCTFEKEEFGDMVSDEEISKALAKYGHGRHGIVLPESAKQLELEETAYAILKKPSSLSTTDPTLVPQSSSTPKSAQKTPQKLPAFLPNRLTAETVDTNKLTASKEQIASPKRPGPSDNGNEIPTKFVQKVTITKEGKKRVAPQLLTTLSATPSTSRLASTQLQHTGSSQLPPQQFSQPINSLPKGGVPILIVGNKTKVNHENDESDQALQEEKIEEGLLKNYYSSLIDSSTSISNINFEAPRYKTNIVHSLNNEQKYVLEVKNGTSEKNPTRIVALENGNTKWMDYLPRPVILVTGSIHFWSIACDDGSLHLYSLTGSRLLPPIMIESKASFLHCNNAYLLCISSSGMVYAWNVVNKTALFTANSLAPILSRVSNNVTIENNSTDIPHVVIASISKEGVPSVTLSTGETYVYSSTMLCWQRITEPWWAIGSREWDSSGLLQSNTQTESQPLKIYEHRTNNVLMDSGRGKLLQKMVADAITEEGYDDFETIVTINHLENKIASARLLKLDDEFLVTSEVYVRLLMHHGLWQKLEEFLGELRTQTKCSIKLSGREVVAKMLVVLRQAVQTDNEFDRANKLIEKYAST.

7 WD repeats span residues 16–55 (GHRL…RENE), 72–111 (THTG…PGLG), 132–171 (GHDN…RLKR), 174–213 (AHQS…IEKT), 222–265 (PLST…SEIN), 268–316 (GHEG…PLLS), and 320–361 (VFQK…DMVS). Polar residues-rich tracts occupy residues 405 to 426 (STTD…QKTP) and 441 to 453 (TVDT…SKEQ). Disordered regions lie at residues 405–470 (STTD…NEIP) and 498–520 (TPST…LPPQ). The span at 498-507 (TPSTSRLAST) shows a compositional bias: low complexity.

It belongs to the WD repeat HIR1 family. As to quaternary structure, interacts with his3 and slm9.

Its subcellular location is the cytoplasm. The protein localises to the nucleus. Functionally, probably required for replication-independent chromatin assembly. Required for transcriptional silencing in the outer repeat (otr) centromeric repeats and the Tf2 long terminal repeat retrotransposons. Repressor of histone gene transcription in G1 arrested cells. Required for repression of htb1 gene expression outside of S phase. This is Protein hir1 (hip1) from Schizosaccharomyces pombe (strain 972 / ATCC 24843) (Fission yeast).